Here is a 158-residue protein sequence, read N- to C-terminus: Phosphopantetheine adenylyltransferase (158 aa).

Ser8 is a binding site for substrate. ATP is bound by residues Ser8–Phe9 and His16. Residues Lys40, Thr72, and Arg86 each contribute to the substrate site. Residues Gly87–Arg89, Glu97, and His122–Ser128 each bind ATP.

This sequence belongs to the bacterial CoaD family. Homohexamer. Requires Mg(2+) as cofactor.

Its subcellular location is the cytoplasm. The enzyme catalyses (R)-4'-phosphopantetheine + ATP + H(+) = 3'-dephospho-CoA + diphosphate. Its pathway is cofactor biosynthesis; coenzyme A biosynthesis; CoA from (R)-pantothenate: step 4/5. In terms of biological role, reversibly transfers an adenylyl group from ATP to 4'-phosphopantetheine, yielding dephospho-CoA (dPCoA) and pyrophosphate. This is Phosphopantetheine adenylyltransferase from Prochlorococcus marinus (strain NATL2A).